Here is an 88-residue protein sequence, read N- to C-terminus: Large ribosomal subunit protein bL27 (88 aa).

A disordered region spans residues 1–21; it reads MAHKKGASSSRNGRDSAAQRL.

The protein belongs to the bacterial ribosomal protein bL27 family.

The protein is Large ribosomal subunit protein bL27 of Mycobacterium avium (strain 104).